Reading from the N-terminus, the 243-residue chain is DNA repair protein RecO (243 aa).

It belongs to the RecO family.

Involved in DNA repair and RecF pathway recombination. The sequence is that of DNA repair protein RecO from Chlamydia trachomatis serovar L2 (strain ATCC VR-902B / DSM 19102 / 434/Bu).